Reading from the N-terminus, the 204-residue chain is Large ribosomal subunit protein eL15 (204 aa).

Over residues 172 to 182 (RGLRGRGHLHN) the composition is skewed to basic residues. Residues 172–204 (RGLRGRGHLHNKAPPSRRANWKRNQTLSLPRYR) are disordered. The segment covering 193-204 (KRNQTLSLPRYR) has biased composition (polar residues).

This sequence belongs to the eukaryotic ribosomal protein eL15 family.

In Petunia hybrida (Petunia), this protein is Large ribosomal subunit protein eL15 (RPL15).